The following is a 486-amino-acid chain: High-affinity iron permease fer2 (486 aa).

Helical transmembrane passes span 76–96 and 113–133; these read IVLLGALTGLLIAFAIGAAFL and LWEGIFNLVAVLLITPMSLAI. The N-linked (GlcNAc...) asparagine glycan is linked to Asn174. The disordered stretch occupies residues 175–209; sequence HSDDSASASSSSARQAAEEEAGTKTTRTEKLNPLE. Low complexity predominate over residues 179–189; it reads SASASSSSARQ. The next 3 helical transmembrane spans lie at 252–272, 283–303, and 308–328; these read ALFTIPLITTLREGLEGVVFI, SIPLPAIVGLAVGLGIGFLIF, and LVSVRIFLVFSTCFLLLIASG. An N-linked (GlcNAc...) asparagine glycan is attached at Asn393. A helical membrane pass occupies residues 400 to 420; sequence SVFMYIGYWFAVAGYLWYQIW. Asn438 carries N-linked (GlcNAc...) asparagine glycosylation. The tract at residues 441 to 486 is disordered; sequence IQARQRKQEKAHQRQLREADQEEHGHSSNSDKQQHPSEAGPSTLSH. Residues 446 to 466 show a composition bias toward basic and acidic residues; that stretch reads RKQEKAHQRQLREADQEEHGH.

The protein belongs to the oxidase-dependent Fe transporter (OFeT) (TC 9.A.10.1) family.

It localises to the cell membrane. Permease for high affinity iron uptake. The protein is High-affinity iron permease fer2 of Mycosarcoma maydis (Corn smut fungus).